A 683-amino-acid chain; its full sequence is MRRCPCRGSLNEAEAGALPAAARMGLEAPRGGRRRQPGQQRPGPGAGAPAGRPEGGGPWARTEGSSLHSEPERAGLGPAPGTESPQAEFWTDGQTEPAAAGLGVETERPKQKTEPDRSSLRTHLEWSWSELETTCLWTETGTDGLWTDPHRSDLQFQPEEASPWTQPGVHGPWTELETHGSQTQPERVKSWADNLWTHQNSSSLQTHPEGACPSKEPSADGSWKELYTDGSRTQQDIEGPWTEPYTDGSQKKQDTEAARKQPGTGGFQIQQDTDGSWTQPSTDGSQTAPGTDCLLGEPEDGPLEEPEPGELLTHLYSHLKCSPLCPVPRLIITPETPEPEAQPVGPPSRVEGGSGGFSSASSFDESEDDVVAGGGGASDPEDRSGSKPWKKLKTVLKYSPFVVSFRKHYPWVQLSGHAGNFQAGEDGRILKRFCQCEQRSLEQLMKDPLRPFVPAYYGMVLQDGQTFNQMEDLLADFEGPSIMDCKMGSRTYLEEELVKARERPRPRKDMYEKMVAVDPGAPTPEEHAQGAVTKPRYMQWRETMSSTSTLGFRIEGIKKADGTCNTNFKKTQALEQVTKVLEDFVDGDHVILQKYVACLEELREALEISPFFKTHEVVGSSLLFVHDHTGLAKVWMIDFGKTVALPDHQTLSHRLPWAEGNREDGYLWGLDNMICLLQGLAQS.

Positions 1–124 are disordered; that stretch reads MRRCPCRGSL…PDRSSLRTHL (124 aa). The segment covering 13-22 has biased composition (low complexity); it reads AEAGALPAAA. Residues 44–58 show a composition bias toward gly residues; sequence PGAGAPAGRPEGGGP. A compositionally biased stretch (basic and acidic residues) spans 105–124; it reads ETERPKQKTEPDRSSLRTHL. 2 positions are modified to phosphoserine: serine 127 and serine 162. A disordered region spans residues 147 to 308; the sequence is TDPHRSDLQF…EDGPLEEPEP (162 aa). Positions 196 to 206 are enriched in polar residues; that stretch reads WTHQNSSSLQT. The segment covering 249-259 has biased composition (basic and acidic residues); the sequence is SQKKQDTEAAR. The span at 267-289 shows a compositional bias: polar residues; the sequence is FQIQQDTDGSWTQPSTDGSQTAP. Residues 297-308 are compositionally biased toward acidic residues; sequence EPEDGPLEEPEP. Positions 324-332 match the Nuclear export signal motif; it reads LCPVPRLII. The interval 334-387 is disordered; the sequence is PETPEPEAQPVGPPSRVEGGSGGFSSASSFDESEDDVVAGGGGASDPEDRSGSK. Phosphothreonine is present on threonine 336. Serine 404 carries the post-translational modification Phosphoserine. Residues lysine 431, 471–473, and aspartate 484 each bind ATP; that span reads EDL. Substrate is bound by residues lysine 486, 507-513, and 534-541; these read RKDMYEK and KPRYMQWR. Residues 509-517 are calmodulin-binding; sequence DMYEKMVAV. ATP-binding residues include lysine 558 and aspartate 638. Lysine 641 serves as a coordination point for substrate.

This sequence belongs to the inositol phosphokinase (IPK) family. In terms of tissue distribution, highly expressed in pancreas, skeletal muscle, liver, placenta and weakly in kidney and brain.

Its subcellular location is the nucleus. The protein localises to the cytoplasm. It carries out the reaction 1D-myo-inositol 1,4,5-trisphosphate + ATP = 1D-myo-inositol 1,3,4,5-tetrakisphosphate + ADP + H(+). Its activity is regulated as follows. Activated by calcium/calmodulin. Inhibited by high concentrations of the substrate Ins(1,2,4)P3, and allosterically activated by the product Ins(1,3,4,5)P4. In terms of biological role, catalyzes the phosphorylation of 1D-myo-inositol 1,4,5-trisphosphate (InsP3) into 1D-myo-inositol 1,3,4,5-tetrakisphosphate and participates to the regulation of calcium homeostasis. Can phosphorylate inositol 2,4,5-triphosphate to inositol 2,4,5,6-tetraphosphate. This Homo sapiens (Human) protein is Inositol-trisphosphate 3-kinase C.